The primary structure comprises 383 residues: 8-amino-7-oxononanoate synthase (383 aa).

Arg-21 is a substrate binding site. Position 108–109 (108–109) interacts with pyridoxal 5'-phosphate; the sequence is GY. His-133 lines the substrate pocket. Pyridoxal 5'-phosphate-binding residues include Ser-179, His-207, and Thr-233. N6-(pyridoxal phosphate)lysine is present on Lys-236. Residue Thr-350 participates in substrate binding.

This sequence belongs to the class-II pyridoxal-phosphate-dependent aminotransferase family. BioF subfamily. In terms of assembly, homodimer. Requires pyridoxal 5'-phosphate as cofactor.

The catalysed reaction is 6-carboxyhexanoyl-[ACP] + L-alanine + H(+) = (8S)-8-amino-7-oxononanoate + holo-[ACP] + CO2. The protein operates within cofactor biosynthesis; biotin biosynthesis. Functionally, catalyzes the decarboxylative condensation of pimeloyl-[acyl-carrier protein] and L-alanine to produce 8-amino-7-oxononanoate (AON), [acyl-carrier protein], and carbon dioxide. This Yersinia pestis bv. Antiqua (strain Angola) protein is 8-amino-7-oxononanoate synthase.